The sequence spans 1012 residues: DNA polymerase catalytic subunit (1012 aa).

It belongs to the DNA polymerase type-B family.

The protein resides in the host nucleus. It catalyses the reaction DNA(n) + a 2'-deoxyribonucleoside 5'-triphosphate = DNA(n+1) + diphosphate. The chain is DNA polymerase catalytic subunit (U38) from Homo sapiens (Human).